The following is a 149-amino-acid chain: 16.9 kDa class I heat shock protein 3 (149 aa).

A sHSP domain is found at 35 to 149 (DTAAFANARV…PEVKAIEISG (115 aa)).

Belongs to the small heat shock protein (HSP20) family. As to quaternary structure, may form oligomeric structures.

Its subcellular location is the cytoplasm. In Oryza sativa subsp. japonica (Rice), this protein is 16.9 kDa class I heat shock protein 3 (HSP16.9C).